Reading from the N-terminus, the 198-residue chain is MARCKS-related protein (198 aa).

The tract at residues 1–198 (MGSQSSKAPR…DPAPASEQNE (198 aa)) is disordered. Gly-2 is lipidated: N-myristoyl glycine. Thr-14 carries the post-translational modification Phosphothreonine. Ser-22, Ser-36, Ser-41, and Ser-48 each carry phosphoserine. The segment covering 53 to 62 (GTEEAAGATG) has biased composition (low complexity). Ser-71 carries the phosphoserine modification. Over residues 76 to 85 (AKGEVPPKET) the composition is skewed to basic and acidic residues. The residue at position 85 (Thr-85) is a Phosphothreonine. Basic residues predominate over residues 86-98 (PKKKKKFSFKKPF). Positions 87–110 (KKKKKFSFKKPFKLSGLSFKRNRK) are effector domain involved in lipid-binding and calmodulin-binding. Phosphoserine; by PKC occurs at positions 93, 101, and 104. Ser-119 carries the phosphoserine modification. Phosphoserine; by MAPK8 is present on Ser-120. Ser-132 is modified (phosphoserine). Thr-148 bears the Phosphothreonine; by MAPK8 mark. Residues Ser-151 and Ser-162 each carry the phosphoserine modification. Residues 156 to 167 (AKGAEASAAAKG) are compositionally biased toward low complexity. The residue at position 170 (Thr-170) is a Phosphothreonine. Thr-182 bears the Phosphothreonine; by MAPK8 mark.

It belongs to the MARCKS family. In terms of assembly, binds to filamentous actin (F-actin), but not to monomeric G-actin, independently of its phosphorylation status. Interacts with calmodulin. Post-translationally, phosphorylated. Phosphorylation at Ser-120 and Thr-182 is non-redundantly catalyzed by MAPK8 in vivo. Phosphorylation at Thr-148 is preferentially catalyzed by MAPK8 in vivo, but this modification can also be catalyzed by other kinases in the absence of MAPK8. May be phosphorylated by protein kinase C, which disrupts the interaction with calmodulin.

The protein localises to the cytoplasm. Its subcellular location is the cytoskeleton. It localises to the cell membrane. Functionally, controls cell movement by regulating actin cytoskeleton homeostasis and filopodium and lamellipodium formation. When unphosphorylated, induces cell migration. When phosphorylated by MAPK8, induces actin bundles formation and stabilization, thereby reducing actin plasticity, hence restricting cell movement, including neuronal migration. May be involved in coupling the protein kinase C and calmodulin signal transduction systems. This is MARCKS-related protein (MARCKSL1) from Bos taurus (Bovine).